A 272-amino-acid chain; its full sequence is Dermonecrotic toxin LvSicTox-alphaIC1biv (272 aa).

Residue His5 is part of the active site. Mg(2+) contacts are provided by Glu25 and Asp27. The Nucleophile role is filled by His41. 2 disulfides stabilise this stretch: Cys45/Cys51 and Cys47/Cys189. Residue Asp84 participates in Mg(2+) binding.

Belongs to the arthropod phospholipase D family. Class II subfamily. Mg(2+) serves as cofactor. In terms of tissue distribution, expressed by the venom gland.

The protein localises to the secreted. It catalyses the reaction an N-(acyl)-sphingosylphosphocholine = an N-(acyl)-sphingosyl-1,3-cyclic phosphate + choline. It carries out the reaction an N-(acyl)-sphingosylphosphoethanolamine = an N-(acyl)-sphingosyl-1,3-cyclic phosphate + ethanolamine. The enzyme catalyses a 1-acyl-sn-glycero-3-phosphocholine = a 1-acyl-sn-glycero-2,3-cyclic phosphate + choline. The catalysed reaction is a 1-acyl-sn-glycero-3-phosphoethanolamine = a 1-acyl-sn-glycero-2,3-cyclic phosphate + ethanolamine. In terms of biological role, dermonecrotic toxins cleave the phosphodiester linkage between the phosphate and headgroup of certain phospholipids (sphingolipid and lysolipid substrates), forming an alcohol (often choline) and a cyclic phosphate. This toxin acts on sphingomyelin (SM). It may also act on ceramide phosphoethanolamine (CPE), lysophosphatidylcholine (LPC) and lysophosphatidylethanolamine (LPE), but not on lysophosphatidylserine (LPS), and lysophosphatidylglycerol (LPG). It acts by transphosphatidylation, releasing exclusively cyclic phosphate products as second products. Induces dermonecrosis, hemolysis, increased vascular permeability, edema, inflammatory response, and platelet aggregation. The protein is Dermonecrotic toxin LvSicTox-alphaIC1biv of Loxosceles variegata (Recluse spider).